The chain runs to 285 residues: MPAATVDHSQRICEVWACNLDDQMKRIRQVIRKYNYVAMDTEFPGVVARPIGEFRSNADYQYQLLRCNVDLLKIIQLGLTFMNEQGEYPPGTSTWQFNFKFNLTEDMYAQDSIELLTSSGIQFKKHEEEGIETQYFAELFMTSGVVLCEGVKWLSFHSGYDFGYLIKILTNSNLPEVEQDFFEILRLFFPVIYDVKYLMKSCKNLKGGLQEVAEQLELERIGPQHQAGSDSLLTGMAFFKMREMFFEDHIDDAKYCGHLYGLGSGSSYVQNGTGNAYEEEANKQS.

A divalent metal cation contacts are provided by D40, E42, D161, D230, and E278.

Belongs to the CAF1 family. In terms of assembly, component of the CCR4-NOT complex. Requires Mn(2+) as cofactor. Mg(2+) serves as cofactor. It depends on Co(2+) as a cofactor.

Its subcellular location is the nucleus. The protein localises to the cytoplasm. The catalysed reaction is Exonucleolytic cleavage of poly(A) to 5'-AMP.. In terms of biological role, has 3'-5' poly(A) exoribonuclease activity for synthetic poly(A) RNA substrate. Catalytic component of the CCR4-NOT complex which is one of the major cellular mRNA deadenylases and is linked to various cellular processes including bulk mRNA degradation, miRNA-mediated repression, translational repression during translational initiation and general transcription regulation. During miRNA-mediated repression the complex also seems to act as translational repressor during translational initiation. Additional complex functions may be a consequence of its influence on mRNA expression. This is CCR4-NOT transcription complex subunit 7 (cnot7) from Xenopus laevis (African clawed frog).